Reading from the N-terminus, the 75-residue chain is DNA-directed RNA polymerase subunit omega (75 aa).

The protein belongs to the RNA polymerase subunit omega family. As to quaternary structure, the RNAP catalytic core consists of 2 alpha, 1 beta, 1 beta' and 1 omega subunit. When a sigma factor is associated with the core the holoenzyme is formed, which can initiate transcription.

It catalyses the reaction RNA(n) + a ribonucleoside 5'-triphosphate = RNA(n+1) + diphosphate. Promotes RNA polymerase assembly. Latches the N- and C-terminal regions of the beta' subunit thereby facilitating its interaction with the beta and alpha subunits. The sequence is that of DNA-directed RNA polymerase subunit omega from Lysinibacillus sphaericus (strain C3-41).